The chain runs to 413 residues: Aminopeptidase 2 (413 aa).

Glu-250, Glu-316, Glu-340, His-345, His-378, and Asp-380 together coordinate a divalent metal cation.

Belongs to the peptidase M29 family. Homodimer. Co(2+) is required as a cofactor. It depends on Zn(2+) as a cofactor. Mg(2+) serves as cofactor.

Its function is as follows. Broad specificity metal-dependent exopeptidase, releasing all N-terminal amino acids. The polypeptide is Aminopeptidase 2 (Geobacillus stearothermophilus (Bacillus stearothermophilus)).